The chain runs to 79 residues: Gas vesicle protein A2 (79 aa).

Residues 9-19 (LAEVLDRVLDK) form an alpha helix 1 region. Residues 23–31 (VDVWARISL) are beta-strand 1. The segment at 32–34 (VGI) is beta turn. The beta-strand 2 stretch occupies residues 35 to 43 (EILTVEARV). Residues 48–67 (VDTFLHYAEEIAKIEQAELT) form an alpha helix 2 region.

This sequence belongs to the gas vesicle GvpA family. In terms of assembly, the gas vesicle shell is 2 nm thick and consists of a single layer of this protein. It forms helical ribs nearly perpendicular to the long axis of the vesicle.

It localises to the gas vesicle shell. Gas vesicles are hollow, gas filled proteinaceous nanostructures found in several microbial planktonic microorganisms. They allow positioning of halobacteria at the optimal depth for growth in the poorly aerated shallow brine pools of their habitat. GvpA forms the gas vesicle shell. This protein can replace the p-gvpA gene in the p-vac locus and increases the critical collapse pressure (CCP) of hybrid gas vesicles from 0.66 MPa to 0.90 MPa. In stationary phase gas vesicles about 30 times more GvpA1 is found than GvpA2. In terms of biological role, expression of 2 c-vac DNA fragments containing 2 divergently transcribed regions (gvpE-gvpF-gvpG-gvpH-gvpI-gvpJ-gvpK-gvpL-gvpM and gvpA-gvpC-gvpN-gvpO) allows H.volcanii to produce gas vesicles. All site-directed mutagenesis is tested in H.volcanii. In Halobacterium salinarum (strain ATCC 700922 / JCM 11081 / NRC-1) (Halobacterium halobium), this protein is Gas vesicle protein A2.